The primary structure comprises 705 residues: Protein arginine N-methyltransferase 7 (705 aa).

SAM-dependent MTase PRMT-type domains are found at residues 29–372 (QNSW…YSLW) and 381–705 (TKSV…QKKL).

This sequence belongs to the class I-like SAM-binding methyltransferase superfamily. Protein arginine N-methyltransferase family. PRMT7 subfamily.

Essential arginine methyltransferase that can both catalyze the formation of omega-N monomethylarginine (MMA) and symmetrical dimethylarginine (sDMA). Specifically mediates the symmetrical dimethylation of arginine residues in the small nuclear ribonucleoproteins SmD1 and SmD3. The polypeptide is Protein arginine N-methyltransferase 7 (Art7) (Drosophila simulans (Fruit fly)).